Consider the following 114-residue polypeptide: T cell receptor beta variable 25-1 (114 aa).

The N-terminal stretch at 1–21 is a signal peptide; the sequence is MTIRLLCYVGFYFLGAGLMEA. An Ig-like domain is found at 22 to 114; that stretch reads DIYQTPRYLV…TSQYLCASSE (93 aa). C42 and C110 are oxidised to a cystine. The N-linked (GlcNAc...) asparagine glycan is linked to N72.

Alpha-beta TR is a heterodimer composed of an alpha and beta chain; disulfide-linked. The alpha-beta TR is associated with the transmembrane signaling CD3 coreceptor proteins to form the TR-CD3 (TcR or TCR). The assembly of alpha-beta TR heterodimers with CD3 occurs in the endoplasmic reticulum where a single alpha-beta TR heterodimer associates with one CD3D-CD3E heterodimer, one CD3G-CD3E heterodimer and one CD247 homodimer forming a stable octameric structure. CD3D-CD3E and CD3G-CD3E heterodimers preferentially associate with TR alpha and TR beta chains, respectively. The association of the CD247 homodimer is the last step of TcR assembly in the endoplasmic reticulum and is required for transport to the cell surface.

Its subcellular location is the cell membrane. In terms of biological role, v region of the variable domain of T cell receptor (TR) beta chain that participates in the antigen recognition. Alpha-beta T cell receptors are antigen specific receptors which are essential to the immune response and are present on the cell surface of T lymphocytes. Recognize peptide-major histocompatibility (MH) (pMH) complexes that are displayed by antigen presenting cells (APC), a prerequisite for efficient T cell adaptive immunity against pathogens. Binding of alpha-beta TR to pMH complex initiates TR-CD3 clustering on the cell surface and intracellular activation of LCK that phosphorylates the ITAM motifs of CD3G, CD3D, CD3E and CD247 enabling the recruitment of ZAP70. In turn ZAP70 phosphorylates LAT, which recruits numerous signaling molecules to form the LAT signalosome. The LAT signalosome propagates signal branching to three major signaling pathways, the calcium, the mitogen-activated protein kinase (MAPK) kinase and the nuclear factor NF-kappa-B (NF-kB) pathways, leading to the mobilization of transcription factors that are critical for gene expression and essential for T cell growth and differentiation. The T cell repertoire is generated in the thymus, by V-(D)-J rearrangement. This repertoire is then shaped by intrathymic selection events to generate a peripheral T cell pool of self-MH restricted, non-autoaggressive T cells. Post-thymic interaction of alpha-beta TR with the pMH complexes shapes TR structural and functional avidity. This chain is T cell receptor beta variable 25-1, found in Homo sapiens (Human).